Here is a 154-residue protein sequence, read N- to C-terminus: Myoglobin (154 aa).

The 147-residue stretch at 2–148 folds into the Globin domain; it reads GLSDGEWQLV…FRNDIAAKYK (147 aa). Position 4 is a phosphoserine (serine 4). Histidine 65 lines the nitrite pocket. Histidine 65 provides a ligand contact to O2. At threonine 68 the chain carries Phosphothreonine. Position 94 (histidine 94) interacts with heme b.

The protein belongs to the globin family. Monomeric.

Its subcellular location is the cytoplasm. The protein resides in the sarcoplasm. The catalysed reaction is Fe(III)-heme b-[protein] + nitric oxide + H2O = Fe(II)-heme b-[protein] + nitrite + 2 H(+). It catalyses the reaction H2O2 + AH2 = A + 2 H2O. Functionally, monomeric heme protein which primary function is to store oxygen and facilitate its diffusion within muscle tissues. Reversibly binds oxygen through a pentacoordinated heme iron and enables its timely and efficient release as needed during periods of heightened demand. Depending on the oxidative conditions of tissues and cells, and in addition to its ability to bind oxygen, it also has a nitrite reductase activity whereby it regulates the production of bioactive nitric oxide. Under stress conditions, like hypoxia and anoxia, it also protects cells against reactive oxygen species thanks to its pseudoperoxidase activity. The chain is Myoglobin (MB) from Spalax ehrenbergi (Middle East blind mole rat).